Consider the following 131-residue polypeptide: Small ribosomal subunit protein uS8 (131 aa).

This sequence belongs to the universal ribosomal protein uS8 family. Part of the 30S ribosomal subunit. Contacts proteins S5 and S12.

Its function is as follows. One of the primary rRNA binding proteins, it binds directly to 16S rRNA central domain where it helps coordinate assembly of the platform of the 30S subunit. This chain is Small ribosomal subunit protein uS8, found in Zymomonas mobilis subsp. mobilis (strain ATCC 31821 / ZM4 / CP4).